The sequence spans 709 residues: Phosphoprotein (709 aa).

The interval 1 to 35 (MDKLELVNDGLNIIDFIQKNQKEIQKTYGRSSIQQ) is N0 binding. Positions 53–92 (SGESEQVEGGMSKDDGDVERRNLEDLSSTSPTDGTIGKRV) are disordered. Over residues 63–76 (MSKDDGDVERRNLE) the composition is skewed to basic and acidic residues. An interaction with host STAT1 region spans residues 110-140 (VVTDVVYHDHGGECTGYGFTSSPERGWSDYT). The residue at position 257 (Ser257) is a Phosphoserine; by host. Residues 265–324 (ISPEDEEPSSVGGKPNESIGRTIEGQSIRDNLQAKDNKSTDVPGAGPKDSAVKEEPPQKR) are disordered. Ser350 carries the phosphoserine; by host modification. Residues 384–473 (VQTADRQRPG…VNPVDDNDSL (90 aa)) form a disordered region. Composition is skewed to polar residues over residues 416 to 426 (GTENVPGSKSG) and 444 to 456 (NAEN…STAV). The segment at 475–580 (DKYIMPSDDF…LVSMMIMIPG (106 aa)) is multimerization.

Homotetramer. Interacts (via multimerization domain) with polymerase L; this interaction forms the polymerase L-P complex. Interacts (via N-terminus) with N0 (via Ncore); this interaction allows P to chaperon N0 to avoid N polymerization before encapsidation. Interacts (via C-terminus) with N-RNA template (via C-terminus); this interaction positions the polymerase on the template for both transcription and replication. Interacts with host STAT1.

The protein localises to the virion. It is found in the host cytoplasm. Functionally, essential cofactor of the RNA polymerase L that plays a central role in the transcription and replication by forming the polymerase complex with RNA polymerase L and recruiting L to the genomic N-RNA template for RNA synthesis. Also plays a central role in the encapsidation of nascent RNA chains by forming the encapsidation complex with the nucleocapsid protein N (N-P complex). Acts as a chaperone for newly synthesized free N protein, so-called N0, allowing encapsidation of nascent RNA chains during replication. The nucleoprotein protein N prevents excessive phosphorylation of P, which leads to down-regulation of viral transcription/ replication. Participates, together with N, in the formation of viral factories (viroplasms), which are large inclusions in the host cytoplasm where replication takes place. In Nipah virus, this protein is Phosphoprotein (P/V/C).